Here is a 106-residue protein sequence, read N- to C-terminus: Protein yippee-like At4g27745 (106 aa).

Positions 8–105 constitute a Yippee domain; the sequence is RLYSCCNCRN…FEKAKIVKED (98 aa). Positions 12, 15, 68, and 71 each coordinate Zn(2+).

This sequence belongs to the yippee family.

The chain is Protein yippee-like At4g27745 from Arabidopsis thaliana (Mouse-ear cress).